Here is an 868-residue protein sequence, read N- to C-terminus: Probable mixed-linked glucan synthase 3 (868 aa).

Positions 36–68 (ERKAAGGGGGGAKGKHWAAADKGERRAAKECGG) are disordered. Basic and acidic residues predominate over residues 53–68 (AAADKGERRAAKECGG). 2 helical membrane passes run 86-106 (LLHP…LFFG) and 116-136 (IMWF…SWLL). D211 is an active-site residue. D412 and D414 together coordinate substrate. D573 is a catalytic residue. 6 helical membrane passes run 649–669 (IYPV…MWLI), 686–706 (LLMI…WAGI), 717–737 (FFMI…VVNL), 771–791 (MLIP…VAIG), 809–829 (IMGL…ALAI), and 837–857 (PIIL…VYVA).

This sequence belongs to the glycosyltransferase 2 family. Plant cellulose synthase-like F subfamily.

The protein localises to the golgi apparatus membrane. Functionally, may catalyze both beta-1,3 and beta-1,4 glycosidic linkage on beta-D-glucan. Essential for (1,3;1,4)-beta-D-glucans synthesis in grasses and cereals (Poaceae). The mixed-linked glucans (which are not present in walls of dicotyledons or most other monocotyledonous plants) are particularly important constituents of the walls of the starchy endosperm and aleurone cells of cereal grains such as oats, wheat, rice and barley. They can account for up to 70% by weight of the wall. This chain is Probable mixed-linked glucan synthase 3 (CSLF3), found in Oryza sativa subsp. indica (Rice).